The primary structure comprises 326 residues: 4-hydroxythreonine-4-phosphate dehydrogenase (326 aa).

Residues H132 and T133 each coordinate substrate. H163, H208, and H263 together coordinate a divalent metal cation. The substrate site is built by K271, N280, and R289.

The protein belongs to the PdxA family. In terms of assembly, homodimer. Zn(2+) is required as a cofactor. It depends on Mg(2+) as a cofactor. Co(2+) serves as cofactor.

It localises to the cytoplasm. It carries out the reaction 4-(phosphooxy)-L-threonine + NAD(+) = 3-amino-2-oxopropyl phosphate + CO2 + NADH. It participates in cofactor biosynthesis; pyridoxine 5'-phosphate biosynthesis; pyridoxine 5'-phosphate from D-erythrose 4-phosphate: step 4/5. Functionally, catalyzes the NAD(P)-dependent oxidation of 4-(phosphooxy)-L-threonine (HTP) into 2-amino-3-oxo-4-(phosphooxy)butyric acid which spontaneously decarboxylates to form 3-amino-2-oxopropyl phosphate (AHAP). The chain is 4-hydroxythreonine-4-phosphate dehydrogenase from Roseobacter denitrificans (strain ATCC 33942 / OCh 114) (Erythrobacter sp. (strain OCh 114)).